We begin with the raw amino-acid sequence, 96 residues long: Co-chaperonin GroES (96 aa).

Belongs to the GroES chaperonin family. As to quaternary structure, heptamer of 7 subunits arranged in a ring. Interacts with the chaperonin GroEL.

Its subcellular location is the cytoplasm. Its function is as follows. Together with the chaperonin GroEL, plays an essential role in assisting protein folding. The GroEL-GroES system forms a nano-cage that allows encapsulation of the non-native substrate proteins and provides a physical environment optimized to promote and accelerate protein folding. GroES binds to the apical surface of the GroEL ring, thereby capping the opening of the GroEL channel. This chain is Co-chaperonin GroES, found in Hydrogenobaculum sp. (strain Y04AAS1).